The chain runs to 161 residues: Arachidonate 5-lipoxygenase-activating protein (161 aa).

At 1-8 (MDQETVGN) the chain is on the lumenal side. A helical transmembrane segment spans residues 9-30 (VVLLAIVTLISVVQNGFFAHKV). The Cytoplasmic segment spans residues 31-52 (EHESRTQNGRSFQRTGTLAFER). Residues 53 to 77 (VYTANQNCVDAYPTFLAVLWSAGLL) traverse the membrane as a helical segment. At 78-80 (CSQ) the chain is on the lumenal side. Residues 81 to 102 (VPAAFAGLMYLFVRQKYFVGYL) traverse the membrane as a helical segment. Residues 103–107 (GERTQ) are Cytoplasmic-facing. Residues 108–115 (STPGYIFG) lie within the membrane without spanning it. Residues 116–128 (KRIILFLFLMSVA) traverse the membrane as a helical segment. Over 129–161 (GIFNYYLIFFFGSDFENYIKTISTTISPLLLIP) the chain is Lumenal.

This sequence belongs to the MAPEG family. Homotrimer. Interacts with LTC4S and ALOX5.

Its subcellular location is the nucleus membrane. The protein localises to the endoplasmic reticulum membrane. Functionally, required for leukotriene biosynthesis by ALOX5 (5-lipoxygenase). Anchors ALOX5 to the membrane. Binds arachidonic acid, and could play an essential role in the transfer of arachidonic acid to ALOX5. Binds to MK-886, a compound that blocks the biosynthesis of leukotrienes. The sequence is that of Arachidonate 5-lipoxygenase-activating protein (ALOX5AP) from Homo sapiens (Human).